Reading from the N-terminus, the 303-residue chain is Coenzyme PQQ synthesis protein B (303 aa).

Belongs to the PqqB family.

It participates in cofactor biosynthesis; pyrroloquinoline quinone biosynthesis. In terms of biological role, may be involved in the transport of PQQ or its precursor to the periplasm. The sequence is that of Coenzyme PQQ synthesis protein B from Pseudomonas syringae pv. syringae (strain B728a).